The following is a 434-amino-acid chain: Putative neutral sphingomyelinase (434 aa).

E83 lines the Mg(2+) pocket. The active-site Proton acceptor is the H318. Transmembrane regions (helical) follow at residues 366–388 (IFFF…FEVF) and 392–414 (FAVL…LIGL).

Belongs to the neutral sphingomyelinase family.

Its subcellular location is the membrane. It catalyses the reaction an N-(acyl)-sphingosylphosphocholine + H2O = an N-acyl-sphingoid base + phosphocholine + H(+). The enzyme catalyses a sphingomyelin + H2O = phosphocholine + an N-acylsphing-4-enine + H(+). It carries out the reaction an N-acyl-15-methylhexadecasphing-4-enine-1-phosphocholine + H2O = an N-acyl-15-methylhexadecasphing-4-enine + phosphocholine + H(+). It functions in the pathway lipid metabolism; sphingolipid metabolism. Functionally, catalyzes the hydrolysis of sphingomyelin producing a ceramide (N-acyl-sphingoid base) and a phosphocholine. C.elegans contain specific sphingoid bases, which are unique or different in structure compared to the sphingoid bases found in other animals. Two examples of these distinctive compounds are: 15-methylhexadecasphinganine and 15-methylhexadecasphing-4-enine. This Caenorhabditis elegans protein is Putative neutral sphingomyelinase.